Reading from the N-terminus, the 300-residue chain is DNA packaging protein OPG160 (300 aa).

The protein belongs to the orthopoxvirus OPG160 protein family. As to quaternary structure, interacts with protein OPG137.

In terms of biological role, participates in viral DNA packaging and virion morphogenesis. The chain is DNA packaging protein OPG160 (OPG160) from Monkeypox virus.